A 464-amino-acid chain; its full sequence is Argininosuccinate lyase 2 (464 aa).

It belongs to the lyase 1 family. Argininosuccinate lyase subfamily.

It is found in the cytoplasm. The catalysed reaction is 2-(N(omega)-L-arginino)succinate = fumarate + L-arginine. It functions in the pathway amino-acid biosynthesis; L-arginine biosynthesis; L-arginine from L-ornithine and carbamoyl phosphate: step 3/3. In Pseudomonas fluorescens (strain Pf0-1), this protein is Argininosuccinate lyase 2.